Here is a 94-residue protein sequence, read N- to C-terminus: Large ribosomal subunit protein uL23 (94 aa).

This sequence belongs to the universal ribosomal protein uL23 family. As to quaternary structure, part of the 50S ribosomal subunit. Contacts protein L29, and trigger factor when it is bound to the ribosome.

In terms of biological role, one of the early assembly proteins it binds 23S rRNA. One of the proteins that surrounds the polypeptide exit tunnel on the outside of the ribosome. Forms the main docking site for trigger factor binding to the ribosome. The protein is Large ribosomal subunit protein uL23 of Geobacter sulfurreducens (strain ATCC 51573 / DSM 12127 / PCA).